Reading from the N-terminus, the 167-residue chain is Xanthine-guanine phosphoribosyltransferase (167 aa).

5-phospho-alpha-D-ribose 1-diphosphate is bound by residues 47 to 48, Gln79, and 102 to 110; these read RG and DDLVDSGKT. Residue Gln79 coordinates GMP. Residue Asp103 participates in Mg(2+) binding. The guanine site is built by Asp106 and Ile149. Xanthine contacts are provided by Asp106 and Ile149. Residues 106–110 and 148–149 each bind GMP; these read DSGKT and WI.

The protein belongs to the purine/pyrimidine phosphoribosyltransferase family. XGPT subfamily. In terms of assembly, homotetramer. Requires Mg(2+) as cofactor.

Its subcellular location is the cell inner membrane. It catalyses the reaction GMP + diphosphate = guanine + 5-phospho-alpha-D-ribose 1-diphosphate. The catalysed reaction is XMP + diphosphate = xanthine + 5-phospho-alpha-D-ribose 1-diphosphate. The enzyme catalyses IMP + diphosphate = hypoxanthine + 5-phospho-alpha-D-ribose 1-diphosphate. Its pathway is purine metabolism; GMP biosynthesis via salvage pathway; GMP from guanine: step 1/1. The protein operates within purine metabolism; XMP biosynthesis via salvage pathway; XMP from xanthine: step 1/1. Its function is as follows. Purine salvage pathway enzyme that catalyzes the transfer of the ribosyl-5-phosphate group from 5-phospho-alpha-D-ribose 1-diphosphate (PRPP) to the N9 position of the 6-oxopurines guanine and xanthine to form the corresponding ribonucleotides GMP (guanosine 5'-monophosphate) and XMP (xanthosine 5'-monophosphate), with the release of PPi. To a lesser extent, also acts on hypoxanthine. This chain is Xanthine-guanine phosphoribosyltransferase, found in Cereibacter sphaeroides (strain ATCC 17025 / ATH 2.4.3) (Rhodobacter sphaeroides).